Reading from the N-terminus, the 461-residue chain is Cytochrome c biogenesis protein CcsB (461 aa).

3 helical membrane passes run L32–I52, T91–T111, and I178–A198.

Belongs to the Ccs1/CcsB family. As to quaternary structure, may interact with CcsA.

It localises to the cellular thylakoid membrane. In terms of biological role, required during biogenesis of c-type cytochromes (cytochrome c6 and cytochrome f) at the step of heme attachment. The polypeptide is Cytochrome c biogenesis protein CcsB (Nostoc sp. (strain PCC 7120 / SAG 25.82 / UTEX 2576)).